We begin with the raw amino-acid sequence, 643 residues long: Methyl-accepting chemotaxis protein McpA (643 aa).

The helical transmembrane segment at 24–44 (ILLSACGVVVLAFALFTLYND) threads the bilayer. The 225-residue stretch at 49-273 (NTIRQNIEAS…GLPSAQWYIG (225 aa)) folds into the Cache domain. A helical transmembrane segment spans residues 293-313 (IIAMLIAVAAIAGLLGLLIPV). The HAMP domain maps to 312–366 (PVLMSPLTTMGRAMRDIAEGEGDLTRRLAVQNKDEFGELATSFNRFVERIHASIS). Residues 371–607 (ATRLVHDLSE…SLNLDITQIN (237 aa)) enclose the Methyl-accepting transducer domain.

Belongs to the methyl-accepting chemotaxis (MCP) protein family.

Its subcellular location is the cell membrane. Functionally, chemotactic-signal transducers respond to changes in the concentration of attractants and repellents in the environment, transduce a signal from the outside to the inside of the cell, and facilitate sensory adaptation through the variation of the level of methylation. McpA is a chemoreceptor that binds to 12 different L-amino acids and mediates chemotaxis toward these amino acids. The sequence is that of Methyl-accepting chemotaxis protein McpA from Pseudomonas putida (strain ATCC 47054 / DSM 6125 / CFBP 8728 / NCIMB 11950 / KT2440).